Consider the following 352-residue polypeptide: 26S proteasome regulatory subunit rpn-8 (352 aa).

An MPN domain is found at 16–152; that stretch reads VSVAPLVLLS…TDAYFAVDEI (137 aa). Residues 303–352 form a disordered region; sequence NRQQQEENDAKKKEGENGEKKEGADKKEGSPAAANGESKEKENSPKEKKK. 2 stretches are compositionally biased toward basic and acidic residues: residues 306 to 331 and 339 to 352; these read QQEE…KKEG and ESKE…EKKK.

The protein belongs to the peptidase M67A family.

Its function is as follows. Acts as a regulatory subunit of the 26S proteasome which is involved in the ATP-dependent degradation of ubiquitinated proteins. The sequence is that of 26S proteasome regulatory subunit rpn-8 (rpn-8) from Neurospora crassa (strain ATCC 24698 / 74-OR23-1A / CBS 708.71 / DSM 1257 / FGSC 987).